We begin with the raw amino-acid sequence, 309 residues long: Sulfate adenylyltransferase subunit 2 (309 aa).

It belongs to the PAPS reductase family. CysD subfamily. In terms of assembly, heterodimer composed of CysD, the smaller subunit, and CysN.

The enzyme catalyses sulfate + ATP + H(+) = adenosine 5'-phosphosulfate + diphosphate. Its pathway is sulfur metabolism; hydrogen sulfide biosynthesis; sulfite from sulfate: step 1/3. Its function is as follows. With CysN forms the ATP sulfurylase (ATPS) that catalyzes the adenylation of sulfate producing adenosine 5'-phosphosulfate (APS) and diphosphate, the first enzymatic step in sulfur assimilation pathway. APS synthesis involves the formation of a high-energy phosphoric-sulfuric acid anhydride bond driven by GTP hydrolysis by CysN coupled to ATP hydrolysis by CysD. This chain is Sulfate adenylyltransferase subunit 2, found in Mycobacterium bovis (strain ATCC BAA-935 / AF2122/97).